The sequence spans 254 residues: MLQTEMKVIQQTEIADKVYELILTGECVADMSPGQFLMLKPSRSDLLMRRPISICSYDKTAKTCILLYRVEGDGTRDFSKLSEGDTIDVLGPLGKGFDIDQTPAPKTALLIGGGIGVPPMYQLGKELAGKGVQVTFVNGFQSAKDSFYEKEMTAYGTVHIATVDGSLGTQGFVTDVTKNFPEEPDVIYSCGPKAMLQAVKASFPETKTYLSLEERMACGIGACYACVCPKADDTKKQFKVCEDGPVFRADEVSL.

Residues 1–99 (MLQTEMKVIQ…LGPLGKGFDI (99 aa)) form the FAD-binding FR-type domain. FAD-binding positions include 50–53 (RPIS), 67–69 (LYR), and 74–75 (GT). [2Fe-2S] cluster-binding residues include cysteine 218, cysteine 223, cysteine 226, and cysteine 241.

The protein belongs to the PyrK family. In terms of assembly, heterotetramer of 2 PyrK and 2 PyrD type B subunits. [2Fe-2S] cluster is required as a cofactor. The cofactor is FAD.

It functions in the pathway pyrimidine metabolism; UMP biosynthesis via de novo pathway; orotate from (S)-dihydroorotate (NAD(+) route): step 1/1. Its function is as follows. Responsible for channeling the electrons from the oxidation of dihydroorotate from the FMN redox center in the PyrD type B subunit to the ultimate electron acceptor NAD(+). The chain is Dihydroorotate dehydrogenase B (NAD(+)), electron transfer subunit from Listeria monocytogenes serotype 4a (strain HCC23).